Consider the following 830-residue polypeptide: Interleukin-4 receptor subunit alpha (830 aa).

Residues 1–32 (MGWLCPGLTFSVSCLILVWAAGSGVTCVSPGG) form the signal peptide. At 33–240 (VRVLEWPICL…NYYEEPLEQR (208 aa)) the chain is on the extracellular side. Cys-41 and Cys-51 form a disulfide bridge. Asn-60 and Asn-78 each carry an N-linked (GlcNAc...) asparagine glycan. A disulfide bridge connects residues Cys-82 and Cys-94. Asn-120, Asn-142, and Asn-170 each carry an N-linked (GlcNAc...) asparagine glycan. A Fibronectin type-III domain is found at 133–232 (APRNLMVHAN…WSPSVKWLNY (100 aa)). Ser-172 carries the phosphoserine modification. Residues Asn-184 and Asn-217 are each glycosylated (N-linked (GlcNAc...) asparagine). Residues 220–224 (WSEWS) carry the WSXWS motif motif. The helical transmembrane segment at 241–264 (LPLGVSISCVVILIICLSCYFGII) threads the bilayer. The Cytoplasmic portion of the chain corresponds to 265–830 (RIKKEWWDQI…SPGPACMDTS (566 aa)). The Box 1 motif signature appears at 270-278 (WWDQIPNPA). The segment covering 378–387 (ENEEEEEEED) has biased composition (acidic residues). Disordered regions lie at residues 378-403 (ENEEEEEEEDKGSFCPSPENSGGSFQ) and 450-488 (MPWAEFPRVGSPEASSQGKEQPLNPEPSPQATPTQSLAS). The required for IRS1 activation and IL4-induced cell growth stretch occupies residues 444–564 (ENASAPMPWA…ETWEQILRQS (121 aa)). Residue Tyr-504 is modified to Phosphotyrosine. Disordered regions lie at residues 508 to 610 (STFL…EAGY) and 623 to 696 (CPGT…DGQK). Positions 518 to 534 (GELDSDPELAEALEEVE) are enriched in acidic residues. Residues 538 to 551 (PAAPQPSEPPPTLQ) show a composition bias toward pro residues. A required for IL4-induced gene expression region spans residues 564-662 (SVLQRRAAPA…VPTPLFTFGL (99 aa)). The segment covering 570–582 (AAPAPASGPSSSG) has biased composition (low complexity). 2 positions are modified to phosphotyrosine: Tyr-583 and Tyr-610. A compositionally biased stretch (polar residues) spans 623 to 635 (CPGTSGLEPSSGE). Tyr-638 is subject to Phosphotyrosine. 2 stretches are compositionally biased toward pro residues: residues 646–655 (PGCPETPVPT) and 665–676 (EPPPSPQNPPFP). The short motif at 716–721 (IVYSAL) is the ITIM motif element. The interval 811–830 (SQTPTAVAMLSPGPACMDTS) is disordered.

Belongs to the type I cytokine receptor family. Type 4 subfamily. The functional IL4 receptor is formed by initial binding of IL4 to IL4R. Subsequent recruitment to the complex of the common gamma chain, in immune cells, creates a type I receptor and, in non-immune cells, of IL13RA1 forms a type II receptor. IL4R can also interact with the IL13/IL13RA1 complex to form a similar type II receptor. Interacts with PIK3C3. Interacts with the SH2-containing phosphatases, PTPN6/SHIP1, PTPN11/SHIP2 and INPP5D/SHIP. Interacts with JAK1 through a Box 1-containing region; inhibited by SOCS5. Interacts with SOCS5; inhibits IL4 signaling. Interacts with JAK3. Interacts with CLM1. Interacts with IL13RA2. On IL4 binding, phosphorylated on C-terminal tyrosine residues.

It is found in the membrane. In terms of biological role, receptor for both interleukin 4 and interleukin 13. Couples to the JAK1/2/3-STAT6 pathway. The IL4 response is involved in promoting Th2 differentiation. The IL4/IL13 responses are involved in regulating IgE production and, chemokine and mucus production at sites of allergic inflammation. In certain cell types, can signal through activation of insulin receptor substrates, IRS1/IRS2. The protein is Interleukin-4 receptor subunit alpha (IL4R) of Sus scrofa (Pig).